An 834-amino-acid polypeptide reads, in one-letter code: Protein EFR3 homolog cmp44E (834 aa).

One copy of the HEAT repeat lies at asparagine 120–asparagine 156. The chain crosses the membrane as a helical span at residues leucine 595–isoleucine 612.

The protein belongs to the EFR3 family. As to expression, expression during embryogenesis is ubiquitous with notably higher levels in the CNS and brain.

Its subcellular location is the membrane. Functionally, an essential gene required for embryogenesis; required for cell viability. The sequence is that of Protein EFR3 homolog cmp44E (stmA) from Drosophila melanogaster (Fruit fly).